A 163-amino-acid polypeptide reads, in one-letter code: NADH-quinone oxidoreductase subunit I (163 aa).

2 4Fe-4S ferredoxin-type domains span residues 53 to 83 (LRRY…IEAG) and 94 to 123 (TLYD…LTPE). 8 residues coordinate [4Fe-4S] cluster: Cys-63, Cys-66, Cys-69, Cys-73, Cys-103, Cys-106, Cys-109, and Cys-113.

Belongs to the complex I 23 kDa subunit family. NDH-1 is composed of 14 different subunits. Subunits NuoA, H, J, K, L, M, N constitute the membrane sector of the complex. Requires [4Fe-4S] cluster as cofactor.

Its subcellular location is the cell inner membrane. It catalyses the reaction a quinone + NADH + 5 H(+)(in) = a quinol + NAD(+) + 4 H(+)(out). In terms of biological role, NDH-1 shuttles electrons from NADH, via FMN and iron-sulfur (Fe-S) centers, to quinones in the respiratory chain. The immediate electron acceptor for the enzyme in this species is believed to be ubiquinone. Couples the redox reaction to proton translocation (for every two electrons transferred, four hydrogen ions are translocated across the cytoplasmic membrane), and thus conserves the redox energy in a proton gradient. The chain is NADH-quinone oxidoreductase subunit I from Coxiella burnetii (strain Dugway 5J108-111).